The primary structure comprises 194 residues: Histone H1.0 (194 aa).

Met-1 carries the N-acetylmethionine modification. The segment covering 1–11 (MTENSTSAPAA) has biased composition (low complexity). The interval 1–29 (MTENSTSAPAAKPKRAKASKKSTDHPKYS) is disordered. Thr-2 is modified (N-acetylthreonine; partial; in Histone H1.0, N-terminally processed). Asn-4 bears the Deamidated asparagine; partial mark. Residues 24–97 (DHPKYSDMIV…GASGSFRLAK (74 aa)) enclose the H15 domain. Arg-42 carries the citrulline modification. The interval 84 to 194 (TKGVGASGSF…SSAKRAGKKK (111 aa)) is disordered. Ser-104 bears the ADP-ribosylserine mark. Basic residues predominate over residues 105–194 (VAFKKTKKEI…SSAKRAGKKK (90 aa)).

This sequence belongs to the histone H1/H5 family. Phosphorylated on Ser-17 in RNA edited version. In terms of processing, ADP-ribosylated on Ser-104 in response to DNA damage.

It localises to the nucleus. The protein localises to the chromosome. Histones H1 are necessary for the condensation of nucleosome chains into higher-order structures. The histones H1.0 are found in cells that are in terminal stages of differentiation or that have low rates of cell division. The protein is Histone H1.0 of Homo sapiens (Human).